A 973-amino-acid polypeptide reads, in one-letter code: Nuclear factor NF-kappa-B p105 subunit (973 aa).

The 208-residue stretch at 38–245 folds into the RHD domain; sequence ADGPYLQILE…DAIYDSKAPN (208 aa). Position 60 is an S-nitrosocysteine; alternate (Cys60). Cys60 carries S-(15-deoxy-Delta12,14-prostaglandin J2-9-yl)cysteine; alternate lipidation. Residue Lys324 forms a Glycyl lysine isopeptide (Lys-Gly) (interchain with G-Cter in SUMO2) linkage. Phosphoserine is present on Ser336. The Nuclear localization signal motif lies at 359 to 364; the sequence is QRKRQK. The GRR stretch occupies residues 371–394; sequence DSFGGGSGAGAGGGGMFGSGGGGG. A disordered region spans residues 434 to 467; sequence TINTKFKNEPRDCAKSDDREILNPPEKETQGEGP. Positions 435–973 are interaction with CFLAR; sequence INTKFKNEPR…GQDGPIEGKI (539 aa). The span at 439 to 463 shows a compositional bias: basic and acidic residues; it reads FKNEPRDCAKSDDREILNPPEKETQ. An N6-acetyllysine modification is found at Lys440. Ser449 carries the phosphoserine modification. ANK repeat units lie at residues 540 to 570, 579 to 608, 612 to 641, 648 to 677, 682 to 711, and 716 to 745; these read NGDSVLHLAIIHLHAQLVRDLLEVTSGSISD, LYQTPLHLAVITKQEDVVEDLLRVGADLSL, WGNSVLHLAAKEGHDKILGVLLKNSKAALL, EGLNAIHIAVMSNSLSCLQLLVAAGAEVNA, SGRTALHLAVEYDNISLAGCLLLEGDALVD, and DGTTPLHIAAGRGSTRLAALLKAAGADPLV. An essential for interaction with HIF1AN region spans residues 648 to 682; that stretch reads EGLNAIHIAVMSNSLSCLQLLVAAGAEVNAQEQKS. The residue at position 676 (Asn676) is a (3S)-3-hydroxyasparagine; by HIF1AN. Residue Ser757 is modified to Phosphoserine. Residues 769-799 form an ANK 7 repeat; the sequence is PGTTPLDMAANWQVFDILNGKPYEPVFTSDD. The Death domain maps to 803 to 890; sequence QGDIKQLTED…EAIEVIQAAF (88 aa). Ser898 carries the post-translational modification Phosphoserine. The residue at position 912 (Ser912) is a Phosphoserine; by GSK3-beta; in vitro. Position 928 is a phosphoserine (Ser928). A phosphoserine; by IKKB mark is found at Ser932 and Ser937. Ser942 is modified (phosphoserine). Thr948 carries the phosphothreonine modification.

As to quaternary structure, component of the NF-kappa-B p65-p50 complex. Homodimer; component of the NF-kappa-B p50-p50 complex. Component of the NF-kappa-B p105-p50 complex. Component of the NF-kappa-B p50-c-Rel complex. Component of a complex consisting of the NF-kappa-B p50-p50 homodimer and BCL3. Also interacts with MAP3K8. NF-kappa-B p50 subunit interacts with NCOA3 coactivator, which may coactivate NF-kappa-B dependent expression via its histone acetyltransferase activity. Interacts with TSC22D3; this interaction prevents nuclear translocation and DNA-binding. Interacts with SPAG9 and UNC5CL. NFKB1/p105 interacts with CFLAR; the interaction inhibits p105 processing into p50. NFKB1/p105 forms a ternary complex with MAP3K8 and TNIP2. Interacts with GSK3B; the interaction prevents processing of p105 to p50. NFKB1/p50 interacts with NFKBIE. NFKB1/p50 interacts with NFKBIZ. Nuclear factor NF-kappa-B p50 subunit interacts with NFKBID. Directly interacts with MEN1. Interacts with HIF1AN. Interacts with FEM1A; interaction is direct. Post-translationally, generation of the NF-kappa-B p50 (Nuclear factor NF-kappa-B p50 subunit) transcription factor takes place both cotranslationally and post-translationally via non-mutually exclusive mechanisms. A cotranslational processing allows the production of both p50 and p105 (Nuclear factor NF-kappa-B p105 subunit) from a single NFKB1 mRNA. While translation occurs, the particular unfolded structure after the GRR repeat region acts as a substrate for the proteasome, promoting degradation of the C-terminus. The GRR acts as a proteasomal 'stop signal', protecting the region upstream of the GRR from degradation and promoting generation of p50. It is unclear if limited proteasome degradation during cotranslational processing depends on ubiquitination. NF-kappa-B p50 is also generated post-translationally following ubiquitination by the KPC complex, leading to limited processing by the proteasome downstream of the GRR region, thereby generating p50. Phosphorylation at the C-terminus by IKBKB/IKKB acts as a signal for ubiquitination and promotes either complete degradation or processing to generate the NF-kappa-B p50 (Nuclear factor NF-kappa-B p50 subunit). Phosphorylation at Ser-912 primes p105 for proteolytic processing in response to TNF-alpha stimulation. Phosphorylation at Ser-928, Ser-932 and Ser-937 are required for BTRC/BTRCP-mediated ubiquitination and proteolysis. Phosphorylation at Ser-932 is also required for ubiquitination by the KPC complex and limited processing to generate NF-kappa-B p50 (Nuclear factor NF-kappa-B p50 subunit). In terms of processing, polyubiquitinated at multiple Lys residues in the C-terminus. Polyubiquitinated by the SCF(FBXW11) and SCF(BTRC) complexes following phosphorylation at Ser-928, Ser-932 and Ser-937, leading to its complete degradation. In contrast, polyubiquitination by the KPC complex following phosphorylation at Ser-932 leads to limited proteosomal processing and generation of the active NF-kappa-B p50 (Nuclear factor NF-kappa-B p50 subunit). Post-translationally, S-nitrosylation of Cys-60 affects DNA binding. The covalent modification of cysteine by 15-deoxy-Delta12,14-prostaglandin-J2 is autocatalytic and reversible. It may occur as an alternative to other cysteine modifications, such as S-nitrosylation and S-palmitoylation.

Its subcellular location is the cytoplasm. It localises to the nucleus. Its function is as follows. NF-kappa-B is a pleiotropic transcription factor present in almost all cell types and is the endpoint of a series of signal transduction events that are initiated by a vast array of stimuli related to many biological processes such as inflammation, immunity, differentiation, cell growth, tumorigenesis and apoptosis. NF-kappa-B is a homo- or heterodimeric complex formed by the Rel-like domain-containing proteins RELA/p65, RELB, NFKB1/p105, NFKB1/p50, REL and NFKB2/p52 and the heterodimeric p65-p50 complex appears to be most abundant one. The dimers bind at kappa-B sites in the DNA of their target genes and the individual dimers have distinct preferences for different kappa-B sites that they can bind with distinguishable affinity and specificity. Different dimer combinations act as transcriptional activators or repressors, respectively. NF-kappa-B is controlled by various mechanisms of post-translational modification and subcellular compartmentalization as well as by interactions with other cofactors or corepressors. NF-kappa-B complexes are held in the cytoplasm in an inactive state complexed with members of the NF-kappa-B inhibitor (I-kappa-B) family. In a conventional activation pathway, I-kappa-B is phosphorylated by I-kappa-B kinases (IKKs) in response to different activators, subsequently degraded thus liberating the active NF-kappa-B complex which translocates to the nucleus. NF-kappa-B heterodimeric p65-p50 and RelB-p50 complexes are transcriptional activators. The NF-kappa-B p50-p50 homodimer is a transcriptional repressor, but can act as a transcriptional activator when associated with BCL3. NFKB1 appears to have dual functions such as cytoplasmic retention of attached NF-kappa-B proteins by p105 and generation of p50 by a cotranslational processing. The proteasome-mediated process ensures the production of both p50 and p105 and preserves their independent function, although processing of NFKB1/p105 also appears to occur post-translationally. p50 binds to the kappa-B consensus sequence 5'-GGRNNYYCC-3', located in the enhancer region of genes involved in immune response and acute phase reactions. In a complex with MAP3K8, NFKB1/p105 represses MAP3K8-induced MAPK signaling; active MAP3K8 is released by proteasome-dependent degradation of NFKB1/p105. P105 is the precursor of the active p50 subunit (Nuclear factor NF-kappa-B p50 subunit) of the nuclear factor NF-kappa-B. Acts as a cytoplasmic retention of attached NF-kappa-B proteins by p105. Functionally, constitutes the active form, which associates with RELA/p65 to form the NF-kappa-B p65-p50 complex to form a transcription factor. Together with RELA/p65, binds to the kappa-B consensus sequence 5'-GGRNNYYCC-3', located in the enhancer region of genes involved in immune response and acute phase reactions. The chain is Nuclear factor NF-kappa-B p105 subunit (Nfkb1) from Rattus norvegicus (Rat).